Reading from the N-terminus, the 495-residue chain is DNA-directed RNA polymerase subunit alpha (495 aa).

The alpha N-terminal domain (alpha-NTD) stretch occupies residues 1-301 (MPYIKHIETK…RMLASLQAPP (301 aa)). Disordered regions lie at residues 159 to 227 (SLVP…EAPH) and 391 to 495 (QEQV…PEET). Positions 170–237 (PRDPLEPEND…IPSMRDDHMT (68 aa)) are insert. The span at 172 to 186 (DPLEPENDSKSETKS) shows a compositional bias: basic and acidic residues. 2 stretches are compositionally biased toward polar residues: residues 207–219 (VNAQIIDTDSNST) and 391–403 (QEQVVNQPSSQIA). Positions 317–495 (AKEIALTPIE…LSSSQNPEET (179 aa)) are alpha C-terminal domain (alpha-CTD). The segment covering 417–426 (RPIDSKETRR) has biased composition (basic and acidic residues). Residues 444–453 (RKSSKTKVKA) show a composition bias toward basic residues. Composition is skewed to polar residues over residues 464-473 (KSANLQQAEE) and 486-495 (LSSSQNPEET).

The protein belongs to the RNA polymerase alpha chain family. In terms of assembly, in plastids the minimal PEP RNA polymerase catalytic core is composed of four subunits: alpha, beta, beta', and beta''. When a (nuclear-encoded) sigma factor is associated with the core the holoenzyme is formed, which can initiate transcription.

Its subcellular location is the plastid. The protein localises to the chloroplast. The enzyme catalyses RNA(n) + a ribonucleoside 5'-triphosphate = RNA(n+1) + diphosphate. Its function is as follows. DNA-dependent RNA polymerase catalyzes the transcription of DNA into RNA using the four ribonucleoside triphosphates as substrates. The chain is DNA-directed RNA polymerase subunit alpha from Nephroselmis olivacea (Green alga).